The primary structure comprises 962 residues: SH3 domain-binding protein 4 (962 aa).

The SH3 1 domain occupies 55–114; that stretch reads GNAKEVIAIKDYCPNNFTTLKFSKGDHLYVLDTSGGEWWYAHNTTEMGYIPSSYVQPLNY. Serine 131, serine 245, serine 250, serine 278, and serine 295 each carry phosphoserine. In terms of domain architecture, ZU5 spans 316–453; it reads TNIVCKLDSS…LEPCMYLAIV (138 aa). Serine 636 carries the phosphoserine modification. An SH3 2 domain is found at 653 to 723; sequence SSLKFGKLLK…HTKNVLVVGK (71 aa).

In terms of assembly, homodimer or homooligomer. Interacts with DNM2, EPS15, clathrin, the adapter protein complex 2/AP-2 and TFRC. Interacts with the Rag GTPases RRAGA, RRAGB, RRAGC and RRAGD; the interaction is most probably direct, preferentially occurs with their inactive GDP-bound form and is negatively regulated by amino acids. In terms of processing, phosphorylated upon EGF stimulation. Phosphorylation prevents interaction with DNM2.

It localises to the membrane. Its subcellular location is the clathrin-coated pit. It is found in the cytoplasmic vesicle. The protein localises to the clathrin-coated vesicle. The protein resides in the nucleus. Functionally, may function in transferrin receptor internalization at the plasma membrane through a cargo-specific control of clathrin-mediated endocytosis. Alternatively, may act as a negative regulator of the amino acid-induced TOR signaling by inhibiting the formation of active Rag GTPase complexes. Preferentially binds inactive Rag GTPase complexes and prevents their interaction with the mTORC1 complex inhibiting its relocalization to lysosomes and its activation. Thereby, may indirectly regulate cell growth, proliferation and autophagy. The protein is SH3 domain-binding protein 4 (Sh3bp4) of Mus musculus (Mouse).